We begin with the raw amino-acid sequence, 63 residues long: Conotoxin TeAr193 (63 aa).

The first 22 residues, 1–22 (MRCLPVFVILLLLIASAPSVDA), serve as a signal peptide directing secretion. Residues 23-48 (QPKTKDDIPQASFLDNAKRYLQVLES) constitute a propeptide that is removed on maturation.

This sequence belongs to the conotoxin T superfamily. Post-translationally, contains 2 disulfide bonds that can be either 'C1-C3, C2-C4' or 'C1-C4, C2-C3', since these disulfide connectivities have been observed for conotoxins with cysteine framework V (for examples, see AC P0DQQ7 and AC P81755). In terms of tissue distribution, expressed by the venom duct.

Its subcellular location is the secreted. In Conus textile (Cloth-of-gold cone), this protein is Conotoxin TeAr193.